The chain runs to 428 residues: 3-phosphoshikimate 1-carboxyvinyltransferase (428 aa).

Positions 22, 23, and 27 each coordinate 3-phosphoshikimate. K22 contributes to the phosphoenolpyruvate binding site. Phosphoenolpyruvate is bound by residues G98 and R126. Residues S172, S173, Q174, S200, D316, N339, and K343 each coordinate 3-phosphoshikimate. Position 174 (Q174) interacts with phosphoenolpyruvate. Residue D316 is the Proton acceptor of the active site. Phosphoenolpyruvate is bound by residues R347, R389, and K414.

Belongs to the EPSP synthase family. In terms of assembly, monomer.

It localises to the cytoplasm. The enzyme catalyses 3-phosphoshikimate + phosphoenolpyruvate = 5-O-(1-carboxyvinyl)-3-phosphoshikimate + phosphate. It participates in metabolic intermediate biosynthesis; chorismate biosynthesis; chorismate from D-erythrose 4-phosphate and phosphoenolpyruvate: step 6/7. In terms of biological role, catalyzes the transfer of the enolpyruvyl moiety of phosphoenolpyruvate (PEP) to the 5-hydroxyl of shikimate-3-phosphate (S3P) to produce enolpyruvyl shikimate-3-phosphate and inorganic phosphate. The protein is 3-phosphoshikimate 1-carboxyvinyltransferase of Psychromonas ingrahamii (strain DSM 17664 / CCUG 51855 / 37).